The sequence spans 122 residues: Large ribosomal subunit protein uL14 (122 aa).

It belongs to the universal ribosomal protein uL14 family. As to quaternary structure, part of the 50S ribosomal subunit. Forms a cluster with proteins L3 and L19. In the 70S ribosome, L14 and L19 interact and together make contacts with the 16S rRNA in bridges B5 and B8.

In terms of biological role, binds to 23S rRNA. Forms part of two intersubunit bridges in the 70S ribosome. In Mesorhizobium japonicum (strain LMG 29417 / CECT 9101 / MAFF 303099) (Mesorhizobium loti (strain MAFF 303099)), this protein is Large ribosomal subunit protein uL14.